We begin with the raw amino-acid sequence, 361 residues long: Arginine N(omega)-methyltransferase (361 aa).

The segment covering 1-17 (MRHVQEARAVPAEHEAR) has biased composition (basic and acidic residues). Positions 1 to 24 (MRHVQEARAVPAEHEARPAPVTMP) are disordered. In terms of domain architecture, SAM-dependent MTase PRMT-type spans 65–361 (DADAFAQIAR…WSDFTLRVSI (297 aa)).

Belongs to the class I-like SAM-binding methyltransferase superfamily. Protein arginine N-methyltransferase family.

It catalyses the reaction L-arginine + S-adenosyl-L-methionine = N(omega)-methyl-L-arginine + S-adenosyl-L-homocysteine + H(+). The protein operates within antibiotic biosynthesis. Functionally, involved in the biosynthesis of the glucosamine-nitrosourea antibiotic streptozotocin (SZN). Catalyzes the conversion of L-arginine to N(omega)-methyl-L-arginine (L-NMA), using S-adenosyl-L-methionine (SAM) as a methyl donor. In Streptomyces achromogenes subsp. streptozoticus, this protein is Arginine N(omega)-methyltransferase.